Reading from the N-terminus, the 435-residue chain is Type A flavoprotein fprA (435 aa).

The zinc metallo-hydrolase stretch occupies residues 48-228 (ANGTTYNAYA…PFRSFVAQVL (181 aa)). Fe cation is bound by residues H98, E100, D102, H167, D186, and H243. In terms of domain architecture, Flavodoxin-like spans 276 to 415 (LLIFYVSAYR…EGRAFGRRLA (140 aa)).

The protein in the N-terminal section; belongs to the zinc metallo-hydrolase group 3 family. Homodimer. FMN serves as cofactor. Requires Fe cation as cofactor.

Functionally, low-potential electron donor to a number of redox enzymes. This is Type A flavoprotein fprA (fprA) from Rhodobacter capsulatus (Rhodopseudomonas capsulata).